A 472-amino-acid chain; its full sequence is L-fuculokinase (472 aa).

The protein belongs to the FGGY kinase family. Requires a divalent metal cation as cofactor.

It catalyses the reaction L-fuculose + ATP = L-fuculose 1-phosphate + ADP + H(+). It participates in carbohydrate degradation; L-fucose degradation; L-lactaldehyde and glycerone phosphate from L-fucose: step 2/3. Its function is as follows. Catalyzes the phosphorylation of L-fuculose. Can also phosphorylate, with lower efficiency, D-ribulose, D-xylulose and D-fructose. The sequence is that of L-fuculokinase from Escherichia coli (strain K12).